Consider the following 252-residue polypeptide: Imidazole glycerol phosphate synthase subunit HisF (252 aa).

Active-site residues include D11 and D130.

It belongs to the HisA/HisF family. Heterodimer of HisH and HisF.

The protein resides in the cytoplasm. It carries out the reaction 5-[(5-phospho-1-deoxy-D-ribulos-1-ylimino)methylamino]-1-(5-phospho-beta-D-ribosyl)imidazole-4-carboxamide + L-glutamine = D-erythro-1-(imidazol-4-yl)glycerol 3-phosphate + 5-amino-1-(5-phospho-beta-D-ribosyl)imidazole-4-carboxamide + L-glutamate + H(+). It participates in amino-acid biosynthesis; L-histidine biosynthesis; L-histidine from 5-phospho-alpha-D-ribose 1-diphosphate: step 5/9. Functionally, IGPS catalyzes the conversion of PRFAR and glutamine to IGP, AICAR and glutamate. The HisF subunit catalyzes the cyclization activity that produces IGP and AICAR from PRFAR using the ammonia provided by the HisH subunit. This chain is Imidazole glycerol phosphate synthase subunit HisF, found in Staphylococcus aureus (strain USA300).